The chain runs to 613 residues: Apoptosis-inducing factor 1, mitochondrial (613 aa).

2 short sequence motifs (mitochondrial localization signal) span residues 1-31 and 63-89; these read MFRCGGLAAGALKQKLVPLVRTVCVRSPRQR and KIDNSVLVLIVGLSTVGAGAYAYKTMK. Residues 1–54 constitute a mitochondrion transit peptide; that stretch reads MFRCGGLAAGALKQKLVPLVRTVCVRSPRQRNRLPGNLFQRWHVPLELQMTRQM. The propeptide at 55–101 is removed in mature form; that stretch reads ASSGASGGKIDNSVLVLIVGLSTVGAGAYAYKTMKEDEKRYNERISG. Residues 100–127 are disordered; it reads SGLGLTPEQKQKKAALSASEGEEVPQDK. The residue at position 105 (T105) is a Phosphothreonine. An N6-succinyllysine modification is found at K109. Phosphoserine is present on residues S116 and S118. The tract at residues 134-483 is FAD-dependent oxidoreductase; it reads FLLIGGGTAA…KPYWHQSMFW (350 aa). FAD-binding positions include 138 to 142, 164 to 165, R172, and K177; these read GGGTA and ED. W196 is a binding site for NAD(+). V233 is an FAD binding site. Residue K255 forms a Glycyl lysine isopeptide (Lys-Gly) (interchain with G-Cter in ubiquitin) linkage. S268 is subject to Phosphoserine. R285 provides a ligand contact to FAD. S292 bears the Phosphoserine mark. Residues 308–311, E336, and K342 each bind NAD(+); that span reads GGFL. S371 is modified (phosphoserine). N6-acetyllysine is present on K388. G399 provides a ligand contact to NAD(+). Residue D438 coordinates FAD. The Nuclear localization signal motif lies at 446–451; the sequence is KLGRRR. Residues 453–454, W483, and E493 contribute to the NAD(+) site; that span reads EH. FAD contacts are provided by residues 454–455 and W483; that span reads HH. The segment covering 513–529 has biased composition (polar residues); it reads AQDNPKSATEQSGTGIR. The segment at 513–554 is disordered; sequence AQDNPKSATEQSGTGIRSESETESEASEITIPPSTPAVPQAP. T521 bears the Phosphothreonine mark. S524 and S530 each carry phosphoserine. Position 583 (N583) interacts with NAD(+). An N6-acetyllysine modification is found at K593.

This sequence belongs to the FAD-dependent oxidoreductase family. Monomer (oxidized form). Homodimer (reduced form). Upon reduction with NADH, undergoes dimerization and forms tight, long-lived FADH2-NAD charge transfer complexes (CTC) resistant to oxidation. Also dimerizes with isoform 3 preventing its release from mitochondria. Interacts with XIAP/BIRC4. Interacts (via N-terminus) with EIF3G (via C-terminus). Interacts with PRELID1. Interacts with CHCHD4; the interaction increases in presence of NADH. Interacts with processed form of PARP1 (Poly [ADP-ribose] polymerase 1, processed C-terminus); interaction is mediated with poly-ADP-ribose chains attached to PARP1, promoting translocation into the nucleus. Requires FAD as cofactor. Under normal conditions, a 54-residue N-terminal segment is first proteolytically removed during or just after translocation into the mitochondrial intermembrane space (IMS) by the mitochondrial processing peptidase (MPP) to form the inner-membrane-anchored mature form (AIFmit). During apoptosis, it is further proteolytically processed at amino-acid position 101 leading to the generation of the mature form, which is confined to the mitochondrial IMS in a soluble form (AIFsol). AIFsol is released to the cytoplasm in response to specific death signals, and translocated to the nucleus, where it induces nuclear apoptosis in a caspase-independent manner. In terms of processing, ubiquitination by XIAP/BIRC4 does not lead to proteasomal degradation. Ubiquitination at Lys-255 by XIAP/BIRC4 blocks its ability to bind DNA and induce chromatin degradation, thereby inhibiting its ability to induce cell death. In terms of tissue distribution, expressed in all tested tissues. Detected in muscle and skin fibroblasts (at protein level). Expressed in osteoblasts (at protein level). Brain specific. As to expression, expressed in all tested tissues except brain. In terms of tissue distribution, isoform 5 is frequently down-regulated in human cancers.

The protein resides in the mitochondrion intermembrane space. It localises to the mitochondrion inner membrane. Its subcellular location is the cytoplasm. The protein localises to the nucleus. It is found in the perinuclear region. The protein resides in the mitochondrion. It localises to the cytosol. It catalyses the reaction A + NADH + H(+) = AH2 + NAD(+). Functionally, functions both as NADH oxidoreductase and as regulator of apoptosis. In response to apoptotic stimuli, it is released from the mitochondrion intermembrane space into the cytosol and to the nucleus, where it functions as a proapoptotic factor in a caspase-independent pathway. Release into the cytoplasm is mediated upon binding to poly-ADP-ribose chains. The soluble form (AIFsol) found in the nucleus induces 'parthanatos' i.e. caspase-independent fragmentation of chromosomal DNA. Binds to DNA in a sequence-independent manner. Interacts with EIF3G, and thereby inhibits the EIF3 machinery and protein synthesis, and activates caspase-7 to amplify apoptosis. Plays a critical role in caspase-independent, pyknotic cell death in hydrogen peroxide-exposed cells. In contrast, participates in normal mitochondrial metabolism. Plays an important role in the regulation of respiratory chain biogenesis by interacting with CHCHD4 and controlling CHCHD4 mitochondrial import. Its function is as follows. Has NADH oxidoreductase activity. Does not induce nuclear apoptosis. In terms of biological role, pro-apoptotic isoform. The sequence is that of Apoptosis-inducing factor 1, mitochondrial from Homo sapiens (Human).